The primary structure comprises 129 residues: L-ectoine synthase (129 aa).

The protein belongs to the ectoine synthase family.

The catalysed reaction is (2S)-4-acetamido-2-aminobutanoate = L-ectoine + H2O. It participates in amine and polyamine biosynthesis; ectoine biosynthesis; L-ectoine from L-aspartate 4-semialdehyde: step 3/3. Catalyzes the circularization of gamma-N-acetyl-alpha,gamma-diaminobutyric acid (ADABA) to ectoine (1,4,5,6-tetrahydro-2-methyl-4-pyrimidine carboxylic acid), which is an excellent osmoprotectant. This chain is L-ectoine synthase, found in Marinomonas sp. (strain MWYL1).